Here is a 139-residue protein sequence, read N- to C-terminus: Actin-depolymerizing factor 2 (139 aa).

Positions 7–139 (GLAVSDECKV…SLDIVKSRTN (133 aa)) constitute an ADF-H domain.

It belongs to the actin-binding proteins ADF family. In terms of tissue distribution, expressed in pollen.

In terms of biological role, actin-depolymerizing protein. Severs actin filaments (F-actin) and binds to actin monomers. This chain is Actin-depolymerizing factor 2 (ADF2), found in Zea mays (Maize).